The chain runs to 1581 residues: Rho guanine nucleotide exchange factor 5 (1581 aa).

6 disordered regions span residues Glu25–His54, Val159–Gln274, Leu316–Ile643, Ser659–Val700, His741–Tyr810, and Val829–Asp1051. Positions Gln41–His54 are enriched in basic and acidic residues. Polar residues predominate over residues Lys204–Leu221. Residues Gly228–Glu241 show a composition bias toward acidic residues. Basic and acidic residues-rich tracts occupy residues Gln326–Val336 and Arg345–Asp380. Residue Ser446 is modified to Phosphoserine. The span at Leu474–Ile492 shows a compositional bias: basic and acidic residues. Polar residues predominate over residues Ser496 to Arg507. The span at Pro515–Val531 shows a compositional bias: low complexity. 5 stretches are compositionally biased toward polar residues: residues Thr569 to Pro595, Thr603 to Phe613, Phe662 to Ala685, Thr748 to Ser760, and Thr779 to Pro791. Residues Val829 to Pro843 are compositionally biased toward pro residues. 3 stretches are compositionally biased toward polar residues: residues Pro867 to Arg881, Gly889 to Val905, and Ser912 to Thr925. 2 positions are modified to phosphoserine: Ser953 and Ser969. Positions Lys975–Glu986 are enriched in basic and acidic residues. Phosphoserine occurs at positions 1029 and 1110. In terms of domain architecture, DH spans Lys1158–Asn1342. One can recognise a PH domain in the interval Leu1375–Leu1488. The 62-residue stretch at Tyr1494–Asn1555 folds into the SH3 domain.

Interacts with SRC. Forms a ternary complex with SRC and the PI3K 85 kDa subunit. Interacts with and is activated by the heterodimer formed by GNB1 and GNG2. Interacts with ODAM (via C-terminus). Interacts with RHOA. Post-translationally, activation of SRC induces tyrosine phosphorylation of ARHGEF5.

It localises to the nucleus. The protein resides in the cytoplasm. It is found in the cell projection. Its subcellular location is the podosome. Its function is as follows. Guanine nucleotide exchange factor which activates Rho GTPases. Strongly activates RHOA. Also strongly activates RHOB, weakly activates RHOC and RHOG and shows no effect on RHOD, RHOV, RHOQ or RAC1. Involved in regulation of cell shape and actin cytoskeletal organization. Plays a role in actin organization by generating a loss of actin stress fibers and the formation of membrane ruffles and filopodia. Required for SRC-induced podosome formation. Involved in positive regulation of immature dendritic cell migration. The chain is Rho guanine nucleotide exchange factor 5 from Mus musculus (Mouse).